Consider the following 299-residue polypeptide: tRNA dimethylallyltransferase (299 aa).

13–20 (GPTASGKT) serves as a coordination point for ATP. Position 15-20 (15-20 (TASGKT)) interacts with substrate. The interaction with substrate tRNA stretch occupies residues 38-41 (DSRQ).

It belongs to the IPP transferase family. As to quaternary structure, monomer. Requires Mg(2+) as cofactor.

It carries out the reaction adenosine(37) in tRNA + dimethylallyl diphosphate = N(6)-dimethylallyladenosine(37) in tRNA + diphosphate. Functionally, catalyzes the transfer of a dimethylallyl group onto the adenine at position 37 in tRNAs that read codons beginning with uridine, leading to the formation of N6-(dimethylallyl)adenosine (i(6)A). This is tRNA dimethylallyltransferase from Synechococcus sp. (strain CC9605).